Here is a 513-residue protein sequence, read N- to C-terminus: L-threonine dehydratase biosynthetic IlvA (513 aa).

Lys-61 carries the post-translational modification N6-(pyridoxal phosphate)lysine. Pyridoxal 5'-phosphate is bound by residues Asn-88, 187-191, and Ser-314; that span reads GGGGL. ACT-like domains are found at residues 338-409 and 432-504; these read ALLA…DLSN and RLYS…DVTE.

This sequence belongs to the serine/threonine dehydratase family. Homotetramer. The cofactor is pyridoxal 5'-phosphate.

It carries out the reaction L-threonine = 2-oxobutanoate + NH4(+). The protein operates within amino-acid biosynthesis; L-isoleucine biosynthesis; 2-oxobutanoate from L-threonine: step 1/1. Functionally, catalyzes the anaerobic formation of alpha-ketobutyrate and ammonia from threonine in a two-step reaction. The first step involved a dehydration of threonine and a production of enamine intermediates (aminocrotonate), which tautomerizes to its imine form (iminobutyrate). Both intermediates are unstable and short-lived. The second step is the nonenzymatic hydrolysis of the enamine/imine intermediates to form 2-ketobutyrate and free ammonia. In the low water environment of the cell, the second step is accelerated by RidA. This chain is L-threonine dehydratase biosynthetic IlvA (ilvA), found in Pasteurella multocida (strain Pm70).